The primary structure comprises 346 residues: Glycerol-3-phosphate dehydrogenase [NAD(P)+] (346 aa).

Positions 15, 16, 36, and 110 each coordinate NADPH. The sn-glycerol 3-phosphate site is built by K110, G139, and S141. A143 contacts NADPH. Residues K194, D247, S257, R258, and N259 each contribute to the sn-glycerol 3-phosphate site. The Proton acceptor role is filled by K194. R258 is an NADPH binding site. NADPH contacts are provided by V282 and E284.

This sequence belongs to the NAD-dependent glycerol-3-phosphate dehydrogenase family.

The protein resides in the cytoplasm. The catalysed reaction is sn-glycerol 3-phosphate + NAD(+) = dihydroxyacetone phosphate + NADH + H(+). It catalyses the reaction sn-glycerol 3-phosphate + NADP(+) = dihydroxyacetone phosphate + NADPH + H(+). The protein operates within membrane lipid metabolism; glycerophospholipid metabolism. In terms of biological role, catalyzes the reduction of the glycolytic intermediate dihydroxyacetone phosphate (DHAP) to sn-glycerol 3-phosphate (G3P), the key precursor for phospholipid synthesis. This chain is Glycerol-3-phosphate dehydrogenase [NAD(P)+], found in Xylella fastidiosa (strain M23).